The primary structure comprises 462 residues: Gamma-aminobutyric acid receptor subunit alpha-5 (462 aa).

The N-terminal stretch at 1–31 is a signal peptide; sequence MDNGMFSGFIMIKNLLLFCISMNLSSHFGFS. At 32–260 the chain is on the extracellular side; the sequence is QMPTSSVKDE…FHLKRKIGYF (229 aa). N45 is a glycosylation site (N-linked (GlcNAc...) asparagine). R101 serves as a coordination point for 4-aminobutanoate. N145 carries an N-linked (GlcNAc...) asparagine glycan. T164 is a binding site for 4-aminobutanoate. A disulfide bond links C173 and C187. N-linked (GlcNAc...) asparagine glycosylation is found at N207 and N236. The helical transmembrane segment at 261–281 threads the bilayer; sequence VIQTYLPCIMTVILSQVSFWL. The Cytoplasmic segment spans residues 282–286; that stretch reads NRESV. Residues 287-308 traverse the membrane as a helical segment; the sequence is PARTVFGVTTVLTMTTLSISAR. At 309 to 318 the chain is on the extracellular side; it reads NSLPKVAYAT. Residues 319-340 form a helical membrane-spanning segment; the sequence is AMDWFIAVCYAFVFSALIEFAT. Residues 341–427 are Cytoplasmic-facing; the sequence is VNYFTKRGWA…TYNSISKIDK (87 aa). Residue K355 forms a Glycyl lysine isopeptide (Lys-Gly) (interchain with G-Cter in ubiquitin) linkage. A disordered region spans residues 377–412; sequence FTTGKMSHPPNIPKEQTPAGTSNTTSVSVKPSEEKT. A helical transmembrane segment spans residues 428–448; sequence MSRIVFPVLFGTFNLVYWATY. The Extracellular segment spans residues 449-462; it reads LNREPVIKGAASPK.

It belongs to the ligand-gated ion channel (TC 1.A.9) family. Gamma-aminobutyric acid receptor (TC 1.A.9.5) subfamily. GABRA5 sub-subfamily. In terms of assembly, heteropentamer, formed by a combination of alpha (GABRA1-6), beta (GABRB1-3), gamma (GABRG1-3), delta (GABRD), epsilon (GABRE), rho (GABRR1-3), pi (GABRP) and theta (GABRQ) chains, each subunit exhibiting distinct physiological and pharmacological properties.

The protein resides in the postsynaptic cell membrane. The protein localises to the cell membrane. It carries out the reaction chloride(in) = chloride(out). Alpha subunit of the heteropentameric ligand-gated chloride channel gated by gamma-aminobutyric acid (GABA), a major inhibitory neurotransmitter in the brain. GABA-gated chloride channels, also named GABA(A) receptors (GABAAR), consist of five subunits arranged around a central pore and contain GABA active binding site(s) located at the alpha and beta subunit interface(s). When activated by GABA, GABAARs selectively allow the flow of chloride anions across the cell membrane down their electrochemical gradient. GABAARs containing alpha-5/GABRA5 subunits are mainly extrasynaptic and contribute to the tonic GABAergic inhibition in the hippocampus. Extrasynaptic alpha-5-containing GABAARs in CA1 pyramidal neurons play a role in learning and memory processes. This is Gamma-aminobutyric acid receptor subunit alpha-5 from Homo sapiens (Human).